The sequence spans 248 residues: Deoxyribose-phosphate aldolase (248 aa).

Asp117 (proton donor/acceptor) is an active-site residue. Lys179 (schiff-base intermediate with acetaldehyde) is an active-site residue. Lys208 (proton donor/acceptor) is an active-site residue.

It belongs to the DeoC/FbaB aldolase family. DeoC type 1 subfamily.

Its subcellular location is the cytoplasm. The catalysed reaction is 2-deoxy-D-ribose 5-phosphate = D-glyceraldehyde 3-phosphate + acetaldehyde. The protein operates within carbohydrate degradation; 2-deoxy-D-ribose 1-phosphate degradation; D-glyceraldehyde 3-phosphate and acetaldehyde from 2-deoxy-alpha-D-ribose 1-phosphate: step 2/2. Catalyzes a reversible aldol reaction between acetaldehyde and D-glyceraldehyde 3-phosphate to generate 2-deoxy-D-ribose 5-phosphate. The polypeptide is Deoxyribose-phosphate aldolase (Thermotoga sp. (strain RQ2)).